Consider the following 404-residue polypeptide: Clavilactone A biosynthesis cluster protein Y (404 aa).

In terms of biological role, part of the gene cluster that mediates the biosynthesis of clavilactone A, a meroterpenoid that features a unique benzo-fused ten-membered carbocyclic ring unit with an alpha,beta-epoxy-gamma-lactone moiety, forming an intriguing 10/5/3 tricyclic nested skeleton. ClaR, ClaS and ClaT are sufficient to produce clavilactone A and the function of claY, if any, has still to be identified. The biosynthesis begins with the prenyltransferase claS that transfers geranyl pyrophosphate (GPP) to hydroquinone to produces geranylhydroquinon. The cytochrome P450 monooxygenase claR then catalyzes the diradical coupling reaction between the intramolecular hydroquinone and allyl moieties to form the benzo-fused ten-membered carbocyclic ring unit of wigantol. Finally the cytochrome P450 monooxygenase claT exquisitely and stereoselectively assembles the alpha,beta-epoxy-gamma-lactone moiety, producing clavilactone A via arnebinol A. In Ampulloclitocybe clavipes (Club foot), this protein is Clavilactone A biosynthesis cluster protein Y.